The following is a 561-amino-acid chain: uncharacterized protein (561 aa).

Positions 1 to 24 (MELGAWRSILYIAFLFAITRHAFC) are cleaved as a signal peptide. Residues 25-509 (KAVNLVHSPE…GYVYLSEIKQ (485 aa)) lie on the Lumenal side of the membrane. Residues 510-530 (YSSLILISLWISLILFVSFLN) traverse the membrane as a helical segment. At 531–561 (RRLILHYSFESVHQLKTLTRKFIYSSLLKQD) the chain is on the cytoplasmic side.

It is found in the endoplasmic reticulum membrane. The protein localises to the golgi apparatus membrane. This is an uncharacterized protein from Schizosaccharomyces pombe (strain 972 / ATCC 24843) (Fission yeast).